The primary structure comprises 210 residues: 3-demethoxyubiquinol 3-hydroxylase (210 aa).

Fe cation is bound by residues E59, E89, H92, E141, E173, and H176.

Belongs to the COQ7 family. Fe cation serves as cofactor.

It is found in the cell membrane. The catalysed reaction is a 5-methoxy-2-methyl-3-(all-trans-polyprenyl)benzene-1,4-diol + AH2 + O2 = a 3-demethylubiquinol + A + H2O. Its pathway is cofactor biosynthesis; ubiquinone biosynthesis. In terms of biological role, catalyzes the hydroxylation of 2-nonaprenyl-3-methyl-6-methoxy-1,4-benzoquinol during ubiquinone biosynthesis. The protein is 3-demethoxyubiquinol 3-hydroxylase of Marinomonas sp. (strain MWYL1).